We begin with the raw amino-acid sequence, 94 residues long: Pyrimidine/purine nucleoside phosphorylase (94 aa).

Belongs to the nucleoside phosphorylase PpnP family.

The enzyme catalyses a purine D-ribonucleoside + phosphate = a purine nucleobase + alpha-D-ribose 1-phosphate. It carries out the reaction adenosine + phosphate = alpha-D-ribose 1-phosphate + adenine. It catalyses the reaction cytidine + phosphate = cytosine + alpha-D-ribose 1-phosphate. The catalysed reaction is guanosine + phosphate = alpha-D-ribose 1-phosphate + guanine. The enzyme catalyses inosine + phosphate = alpha-D-ribose 1-phosphate + hypoxanthine. It carries out the reaction thymidine + phosphate = 2-deoxy-alpha-D-ribose 1-phosphate + thymine. It catalyses the reaction uridine + phosphate = alpha-D-ribose 1-phosphate + uracil. The catalysed reaction is xanthosine + phosphate = alpha-D-ribose 1-phosphate + xanthine. In terms of biological role, catalyzes the phosphorolysis of diverse nucleosides, yielding D-ribose 1-phosphate and the respective free bases. Can use uridine, adenosine, guanosine, cytidine, thymidine, inosine and xanthosine as substrates. Also catalyzes the reverse reactions. In Vibrio parahaemolyticus serotype O3:K6 (strain RIMD 2210633), this protein is Pyrimidine/purine nucleoside phosphorylase.